The following is a 217-amino-acid chain: tRNA (guanine-N(7)-)-methyltransferase (217 aa).

Residues Glu44, Glu69, Asp96, and Asp118 each coordinate S-adenosyl-L-methionine. Residue Asp118 is part of the active site. Substrate-binding positions include Lys122, Asp154, and 191–194; that span reads TEYE.

It belongs to the class I-like SAM-binding methyltransferase superfamily. TrmB family.

It catalyses the reaction guanosine(46) in tRNA + S-adenosyl-L-methionine = N(7)-methylguanosine(46) in tRNA + S-adenosyl-L-homocysteine. It participates in tRNA modification; N(7)-methylguanine-tRNA biosynthesis. In terms of biological role, catalyzes the formation of N(7)-methylguanine at position 46 (m7G46) in tRNA. In Bacillus mycoides (strain KBAB4) (Bacillus weihenstephanensis), this protein is tRNA (guanine-N(7)-)-methyltransferase.